We begin with the raw amino-acid sequence, 430 residues long: Protein trichome birefringence-like 24 (430 aa).

The chain crosses the membrane as a helical; Signal-anchor for type II membrane protein span at residues 15-35 (VLLIKLISAILISFFAFRLFI). The GDS motif signature appears at 153–155 (GDS). Positions 406-420 (DCLHWCLPGPFDYLN) match the DCXHWCLPGXXDXWN motif motif.

It belongs to the PC-esterase family. TBL subfamily.

Its subcellular location is the membrane. May act as a bridging protein that binds pectin and other cell wall polysaccharides. Probably involved in maintaining esterification of pectins. May be involved in the specific O-acetylation of cell wall polymers. The chain is Protein trichome birefringence-like 24 (TBL24) from Arabidopsis thaliana (Mouse-ear cress).